Reading from the N-terminus, the 329-residue chain is rRNA 2'-O-methyltransferase fibrillarin (329 aa).

A disordered region spans residues 1-85 (MAFGAPRGRG…GGARGGARGG (85 aa)). Over residues 13–84 (RGGFGGRGGS…RGGARGGARG (72 aa)) the composition is skewed to gly residues. Residues 181–182 (TS), 200–201 (EF), 225–226 (DA), and 245–248 (DVAQ) contribute to the S-adenosyl-L-methionine site.

The protein belongs to the methyltransferase superfamily. Fibrillarin family. In terms of assembly, component of box C/D small nucleolar ribonucleoprotein (snoRNP) particles that contain SNU13, NOP1, SIK1/NOP56 and NOP58, plus a guide RNA. Post-translationally, by homology to other fibrillarins, some or all of the N-terminal domain arginines are modified to asymmetric dimethylarginine (DMA).

The protein localises to the nucleus. It is found in the nucleolus. It catalyses the reaction L-glutaminyl-[histone H2A] + S-adenosyl-L-methionine = N(5)-methyl-L-glutaminyl-[histone H2A] + S-adenosyl-L-homocysteine + H(+). S-adenosyl-L-methionine-dependent methyltransferase that has the ability to methylate both RNAs and proteins. Involved in pre-rRNA processing. Utilizes the methyl donor S-adenosyl-L-methionine to catalyze the site-specific 2'-hydroxyl methylation of ribose moieties in pre-ribosomal RNA. Site specificity is provided by a guide RNA that base pairs with the substrate. Methylation occurs at a characteristic distance from the sequence involved in base pairing with the guide RNA. Also acts as a protein methyltransferase by mediating methylation of 'Gln-105' of histone H2A (H2AQ105me), a modification that impairs binding of the FACT complex and is specifically present at 35S ribosomal DNA locus. This is rRNA 2'-O-methyltransferase fibrillarin (NOP1) from Debaryomyces hansenii (strain ATCC 36239 / CBS 767 / BCRC 21394 / JCM 1990 / NBRC 0083 / IGC 2968) (Yeast).